Reading from the N-terminus, the 304-residue chain is Thyroxine 5-deiodinase (304 aa).

Positions 1 to 23 (MPRQATSRLVVGEGEGSQGASGP) are disordered. At 1–44 (MPRQATSRLVVGEGEGSQGASGPAATMLRSLLLHSLRLCAQTAS) the chain is on the cytoplasmic side. Residues 45–67 (CLVLFPRFLGTAFMLWLLDFLCI) traverse the membrane as a helical; Signal-anchor for type II membrane protein segment. Residues 68–304 (RKHFLGRRRR…QLHGARPRRV (237 aa)) are Extracellular-facing. The tract at residues 78–99 (GQPEPEVELNSEGEEVPPDDPP) is disordered. Residues 82–95 (PEVELNSEGEEVPP) are compositionally biased toward acidic residues. Selenocysteine 170 is an active-site residue. Selenocysteine 170 is a non-standard amino acid (selenocysteine).

It belongs to the iodothyronine deiodinase family. Monomer. Homodimer. May undergo minor heretodimerization with DIO1 and DIO2. As to expression, expressed in placenta and several fetal tissues.

The protein resides in the cell membrane. The protein localises to the endosome membrane. The enzyme catalyses 3,3',5'-triiodo-L-thyronine + iodide + A + H(+) = L-thyroxine + AH2. The catalysed reaction is 3,3'-diiodo-L-thyronine + iodide + A + H(+) = 3,3',5-triiodo-L-thyronine + AH2. It catalyses the reaction 3-iodo-L-thyronine + iodide + A + H(+) = 3,5-diiodo-L-thyronine + AH2. It carries out the reaction L-thyronine + iodide + A + H(+) = 3-iodo-L-thyronine + AH2. The enzyme catalyses 3',5'-diiodo-L-thyronine + iodide + A + H(+) = 3,3',5'-triiodo-L-thyronine + AH2. The catalysed reaction is 3'-iodo-L-thyronine + iodide + A + H(+) = 3,3'-diiodo-L-thyronine + AH2. It catalyses the reaction 3,3',5'-triiodothyronamine + iodide + A + H(+) = 3,3',5,5'-tetraiodothyronamine + AH2. It carries out the reaction 3',5'-diiodothyronamine + iodide + A + H(+) = 3,3',5'-triiodothyronamine + AH2. The enzyme catalyses 3,3'-diiodothyronamine + iodide + A + H(+) = 3,3',5-triiodothyronamine + AH2. The catalysed reaction is 3-iodothyronamine + iodide + A + H(+) = 3,5-diiodothyronamine + AH2. It catalyses the reaction 3'-iodothyronamine + iodide + A + H(+) = 3,3'-diiodothyronamine + AH2. It carries out the reaction thyronamine + iodide + A + H(+) = 3-iodothyronamine + AH2. Functionally, plays a crucial role in the metabolism of thyroid hormones (TH) and has specific roles in TH activation and inactivation by deiodination. Catalyzes the deiodination of L-thyroxine (T4) to 3,3',5'-triiodothyronine (rT3), 3,5,3'-triiodothyronine (T3) to 3,3'-diiodothyronine (3,3'-T2), 3,5-diiodothyronine (3,5-T2) to 3-monoiodothyronine (3-T1), rT3 to 3',5'-diiodothyronine (3',5'-T2) and 3,3'-T2 to 3'-monoiodothyronine (3'-T1) via inner-ring deiodination (IRD). Catalyzes the deiodination of 3-T1 to L-thyronine (T0) via outer-ring deiodination (ORD). Catalyzes the tyrosyl ring deiodinations of 3,3',5,5'-tetraiodothyronamine, 3,3',5'-triiodothyronamine, 3,5,3'-triiodothyronamine, 3,5-diiodothyronamine, 3,3'-diiodothyronamine and 3-iodothyronamine. The polypeptide is Thyroxine 5-deiodinase (DIO3) (Homo sapiens (Human)).